We begin with the raw amino-acid sequence, 625 residues long: Putative xanthine/uracil permease C887.17 (625 aa).

The next 10 membrane-spanning stretches (helical) occupy residues 49 to 69, 107 to 127, 154 to 174, 192 to 212, 246 to 263, 328 to 348, 369 to 389, 406 to 426, 429 to 449, and 465 to 485; these read AGLT…TILV, AAIS…PVGM, EALL…VIGL, AGIG…LGVI, MWVG…LMMY, FAIA…GTLY, VAYI…CSPV, GILG…APIF, IPVW…MKST, and ITIA…AGII. Residues 595–625 are disordered; the sequence is EAVGESESFSNRQQDFRTPYAGIDMDTDDRI.

Belongs to the nucleobase:cation symporter-2 (NCS2) (TC 2.A.40) family. Azg-like subfamily.

The protein resides in the golgi apparatus membrane. This is Putative xanthine/uracil permease C887.17 from Schizosaccharomyces pombe (strain 972 / ATCC 24843) (Fission yeast).